Consider the following 405-residue polypeptide: L-rhamnonate dehydratase (405 aa).

His33 and Arg59 together coordinate substrate. Positions 226, 252, and 280 each coordinate Mg(2+). The active-site Proton acceptor is the His329. Glu349 contributes to the substrate binding site.

It belongs to the mandelate racemase/muconate lactonizing enzyme family. RhamD subfamily. Homooctamer; tetramer of dimers. The cofactor is Mg(2+).

It catalyses the reaction L-rhamnonate = 2-dehydro-3-deoxy-L-rhamnonate + H2O. Its function is as follows. Catalyzes the dehydration of L-rhamnonate to 2-keto-3-deoxy-L-rhamnonate (KDR). This is L-rhamnonate dehydratase from Escherichia coli (strain SMS-3-5 / SECEC).